Consider the following 452-residue polypeptide: Bifunctional protein GlmU (452 aa).

The tract at residues 1–232 (MTARNSLTIV…EDEVRGINTK (232 aa)) is pyrophosphorylase. UDP-N-acetyl-alpha-D-glucosamine contacts are provided by residues 11-14 (LAAG), lysine 25, glutamine 78, and 83-84 (GT). Aspartate 108 contributes to the Mg(2+) binding site. 4 residues coordinate UDP-N-acetyl-alpha-D-glucosamine: glycine 144, glutamate 158, asparagine 173, and asparagine 230. Asparagine 230 provides a ligand contact to Mg(2+). The interval 233 to 253 (AQLAEAETVMQTRLRLAAMAA) is linker. The tract at residues 254-452 (GVTLIAPETV…KSRHRKPKAH (199 aa)) is N-acetyltransferase. Positions 319 and 337 each coordinate UDP-N-acetyl-alpha-D-glucosamine. The active-site Proton acceptor is histidine 349. Residues tyrosine 352 and asparagine 363 each coordinate UDP-N-acetyl-alpha-D-glucosamine. Residues alanine 366, 372-373 (NY), serine 391, serine 409, and arginine 426 contribute to the acetyl-CoA site.

In the N-terminal section; belongs to the N-acetylglucosamine-1-phosphate uridyltransferase family. It in the C-terminal section; belongs to the transferase hexapeptide repeat family. Homotrimer. Mg(2+) serves as cofactor.

The protein localises to the cytoplasm. The catalysed reaction is alpha-D-glucosamine 1-phosphate + acetyl-CoA = N-acetyl-alpha-D-glucosamine 1-phosphate + CoA + H(+). It catalyses the reaction N-acetyl-alpha-D-glucosamine 1-phosphate + UTP + H(+) = UDP-N-acetyl-alpha-D-glucosamine + diphosphate. The protein operates within nucleotide-sugar biosynthesis; UDP-N-acetyl-alpha-D-glucosamine biosynthesis; N-acetyl-alpha-D-glucosamine 1-phosphate from alpha-D-glucosamine 6-phosphate (route II): step 2/2. Its pathway is nucleotide-sugar biosynthesis; UDP-N-acetyl-alpha-D-glucosamine biosynthesis; UDP-N-acetyl-alpha-D-glucosamine from N-acetyl-alpha-D-glucosamine 1-phosphate: step 1/1. It functions in the pathway bacterial outer membrane biogenesis; LPS lipid A biosynthesis. Functionally, catalyzes the last two sequential reactions in the de novo biosynthetic pathway for UDP-N-acetylglucosamine (UDP-GlcNAc). The C-terminal domain catalyzes the transfer of acetyl group from acetyl coenzyme A to glucosamine-1-phosphate (GlcN-1-P) to produce N-acetylglucosamine-1-phosphate (GlcNAc-1-P), which is converted into UDP-GlcNAc by the transfer of uridine 5-monophosphate (from uridine 5-triphosphate), a reaction catalyzed by the N-terminal domain. In Rhodopseudomonas palustris (strain TIE-1), this protein is Bifunctional protein GlmU.